We begin with the raw amino-acid sequence, 309 residues long: Protein FdhE (309 aa).

It belongs to the FdhE family.

Its subcellular location is the cytoplasm. Necessary for formate dehydrogenase activity. In Salmonella arizonae (strain ATCC BAA-731 / CDC346-86 / RSK2980), this protein is Protein FdhE.